The following is a 498-amino-acid chain: MRINPTTSGPGVSTLEEKNLGRIAQIIGPVLDVAFPPGKMPNIYNALVVKGRDTVGQQINVTCEVQQLLGNNRVRAVAMSATDGLMRGMEVIDTGAPLSVPVGGATLGRIFNVLGEPVDNLGPVDTRTTSPIHRSAPAFIQLDTKLSIFETGIKVVDLLAPYRRGGKIGLFGGAGVGKTVLIMELINNIAKAHGGVSVFGGVGERTREGNDLYMEMKESGVINEQNIAESKVALVHGQMNEPPGARMRVGLTALTMAEYFRDVNEQDVLLFIDNIFRFVQAGSEVSALLGRMPSAVGYQPTLSTEMGSLQERITSTKEGSITSIQAVYVPADDLTDPAPATTFAHLDATTVLSRGLAAKGIYPAVDPLDSTSTMLQPRIVGEEHYEIAQRVKQTSQRYKELQDIIAILGLDELSEEDRLTVARARKIERFLSQPFFVAEVFTGSPGKYVGLAETIRGFQLILSGELDGLPEQAFYLVGNIDEATAKAMNLEVESKLKK.

Residue 172-179 (GGAGVGKT) coordinates ATP.

The protein belongs to the ATPase alpha/beta chains family. As to quaternary structure, F-type ATPases have 2 components, CF(1) - the catalytic core - and CF(0) - the membrane proton channel. CF(1) has five subunits: alpha(3), beta(3), gamma(1), delta(1), epsilon(1). CF(0) has four main subunits: a(1), b(1), b'(1) and c(9-12).

Its subcellular location is the plastid. The protein resides in the chloroplast thylakoid membrane. The enzyme catalyses ATP + H2O + 4 H(+)(in) = ADP + phosphate + 5 H(+)(out). Functionally, produces ATP from ADP in the presence of a proton gradient across the membrane. The catalytic sites are hosted primarily by the beta subunits. This is ATP synthase subunit beta, chloroplastic from Calycanthus floridus var. glaucus (Eastern sweetshrub).